The following is a 202-amino-acid chain: LexA repressor (202 aa).

The H-T-H motif DNA-binding region spans 28 to 48; the sequence is RAEIAAQLGFRSPNAAEEHLK. Residues serine 119 and lysine 156 each act as for autocatalytic cleavage activity in the active site.

Belongs to the peptidase S24 family. As to quaternary structure, homodimer.

The enzyme catalyses Hydrolysis of Ala-|-Gly bond in repressor LexA.. Its function is as follows. Represses a number of genes involved in the response to DNA damage (SOS response), including recA and lexA. Binds to the 16 bp palindromic sequence 5'-CTGTATATATATACAG-3'. In the presence of single-stranded DNA, RecA interacts with LexA causing an autocatalytic cleavage which disrupts the DNA-binding part of LexA, leading to derepression of the SOS regulon and eventually DNA repair. The chain is LexA repressor from Erwinia tasmaniensis (strain DSM 17950 / CFBP 7177 / CIP 109463 / NCPPB 4357 / Et1/99).